The following is a 221-amino-acid chain: 7-cyano-7-deazaguanine synthase (221 aa).

Phe10 to Leu20 lines the ATP pocket. Residues Cys186, Cys195, Cys198, and Cys201 each contribute to the Zn(2+) site.

Belongs to the QueC family. As to quaternary structure, homodimer. Zn(2+) is required as a cofactor.

The catalysed reaction is 7-carboxy-7-deazaguanine + NH4(+) + ATP = 7-cyano-7-deazaguanine + ADP + phosphate + H2O + H(+). The protein operates within purine metabolism; 7-cyano-7-deazaguanine biosynthesis. In terms of biological role, catalyzes the ATP-dependent conversion of 7-carboxy-7-deazaguanine (CDG) to 7-cyano-7-deazaguanine (preQ(0)). This chain is 7-cyano-7-deazaguanine synthase, found in Geobacillus thermodenitrificans (strain NG80-2).